A 180-amino-acid polypeptide reads, in one-letter code: Protein sll1483 (180 aa).

The signal sequence occupies residues M1–A26. The 132-residue stretch at A45 to I176 folds into the FAS1 domain.

This is Protein sll1483 from Synechocystis sp. (strain ATCC 27184 / PCC 6803 / Kazusa).